The primary structure comprises 423 residues: COUP transcription factor 1 (423 aa).

Residues 1 to 81 are disordered; that stretch reads MAMVVSSWRD…QGPPGSGQSQ (81 aa). The segment covering 39 to 67 has biased composition (low complexity); that stretch reads EQQQQAGSGAPHTPQTPGQPGAPATPGTA. Residues 83–158 constitute a DNA-binding region (nuclear receptor); it reads HIECVVCGDK…VGMRREAVQR (76 aa). 2 NR C4-type zinc fingers span residues 86 to 106 and 122 to 146; these read CVVC…CEGC and CRAN…LKKC. One can recognise an NR LBD domain in the interval 184-410; the sequence is YLSGYISLLL…TLIRDMLLSG (227 aa).

This sequence belongs to the nuclear hormone receptor family. NR2 subfamily. In terms of assembly, binds DNA as dimer; homodimer and probable heterodimer with NR2F6. Interacts with GTF2B; this interaction is direct. Interacts with COPS2.

It localises to the nucleus. In terms of biological role, coup (chicken ovalbumin upstream promoter) transcription factor binds to the ovalbumin promoter and, in conjunction with another protein (S300-II) stimulates initiation of transcription. Binds to both direct repeats and palindromes of the 5'-AGGTCA-3' motif. Represses transcriptional activity of LHCG. This Homo sapiens (Human) protein is COUP transcription factor 1 (NR2F1).